The chain runs to 281 residues: Bifunctional protein FolD (281 aa).

NADP(+)-binding positions include G165–G167, T192, and V233.

This sequence belongs to the tetrahydrofolate dehydrogenase/cyclohydrolase family. As to quaternary structure, homodimer.

The enzyme catalyses (6R)-5,10-methylene-5,6,7,8-tetrahydrofolate + NADP(+) = (6R)-5,10-methenyltetrahydrofolate + NADPH. The catalysed reaction is (6R)-5,10-methenyltetrahydrofolate + H2O = (6R)-10-formyltetrahydrofolate + H(+). It participates in one-carbon metabolism; tetrahydrofolate interconversion. Functionally, catalyzes the oxidation of 5,10-methylenetetrahydrofolate to 5,10-methenyltetrahydrofolate and then the hydrolysis of 5,10-methenyltetrahydrofolate to 10-formyltetrahydrofolate. This chain is Bifunctional protein FolD, found in Mycobacterium tuberculosis (strain ATCC 25177 / H37Ra).